Here is a 109-residue protein sequence, read N- to C-terminus: Large ribosomal subunit protein uL24 (109 aa).

It belongs to the universal ribosomal protein uL24 family. Part of the 50S ribosomal subunit.

In terms of biological role, one of two assembly initiator proteins, it binds directly to the 5'-end of the 23S rRNA, where it nucleates assembly of the 50S subunit. One of the proteins that surrounds the polypeptide exit tunnel on the outside of the subunit. The protein is Large ribosomal subunit protein uL24 of Ehrlichia canis (strain Jake).